The following is a 30-amino-acid chain: Cyclotide hyen-F (30 aa).

Positions 1-30 form a cross-link, cyclopeptide (Gly-Asn); that stretch reads GLPCGESCVYIPCISTVLGCSCSNKVCYRN. Cystine bridges form between C4–C20, C8–C22, and C13–C27.

Post-translationally, this is a cyclic peptide. In terms of tissue distribution, detected in seeds (at protein level).

Its function is as follows. Probably participates in a plant defense mechanism. The sequence is that of Cyclotide hyen-F from Pigea enneasperma (Spade flower).